The following is a 99-amino-acid chain: Large ribosomal subunit protein eL30 (99 aa).

The protein belongs to the eukaryotic ribosomal protein eL30 family.

The chain is Large ribosomal subunit protein eL30 from Methanobrevibacter smithii (strain ATCC 35061 / DSM 861 / OCM 144 / PS).